The chain runs to 436 residues: GTPase Der (436 aa).

2 consecutive EngA-type G domains span residues 4 to 167 (PVVA…PKRG) and 176 to 351 (IKFC…ENHA). GTP contacts are provided by residues 10 to 17 (GRPNVGKS), 57 to 61 (DTGGI), 119 to 122 (NKID), 182 to 189 (GRPNVGKS), 229 to 233 (DTAGM), and 294 to 297 (NKWD). One can recognise a KH-like domain in the interval 352-436 (MRVQTNVLNE…PIKIIARPRK (85 aa)).

This sequence belongs to the TRAFAC class TrmE-Era-EngA-EngB-Septin-like GTPase superfamily. EngA (Der) GTPase family. In terms of assembly, associates with the 50S ribosomal subunit.

GTPase that plays an essential role in the late steps of ribosome biogenesis. The polypeptide is GTPase Der (Geobacillus sp. (strain WCH70)).